The chain runs to 203 residues: Orotate phosphoribosyltransferase (203 aa).

Residues R94, K98, H100, and 120-128 each bind 5-phospho-alpha-D-ribose 1-diphosphate; that span reads EDLISTGGS. An orotate-binding site is contributed by S124.

The protein belongs to the purine/pyrimidine phosphoribosyltransferase family. PyrE subfamily. As to quaternary structure, homodimer. Mg(2+) is required as a cofactor.

It catalyses the reaction orotidine 5'-phosphate + diphosphate = orotate + 5-phospho-alpha-D-ribose 1-diphosphate. It participates in pyrimidine metabolism; UMP biosynthesis via de novo pathway; UMP from orotate: step 1/2. Functionally, catalyzes the transfer of a ribosyl phosphate group from 5-phosphoribose 1-diphosphate to orotate, leading to the formation of orotidine monophosphate (OMP). In Staphylococcus aureus (strain Mu50 / ATCC 700699), this protein is Orotate phosphoribosyltransferase.